The following is a 206-amino-acid chain: Small ribosomal subunit protein uS4 (206 aa).

Residues 96–156 enclose the S4 RNA-binding domain; it reads GRLDNVVYRM…EKSKKQSRIK (61 aa).

It belongs to the universal ribosomal protein uS4 family. Part of the 30S ribosomal subunit. Contacts protein S5. The interaction surface between S4 and S5 is involved in control of translational fidelity.

Functionally, one of the primary rRNA binding proteins, it binds directly to 16S rRNA where it nucleates assembly of the body of the 30S subunit. Its function is as follows. With S5 and S12 plays an important role in translational accuracy. This Photorhabdus laumondii subsp. laumondii (strain DSM 15139 / CIP 105565 / TT01) (Photorhabdus luminescens subsp. laumondii) protein is Small ribosomal subunit protein uS4.